We begin with the raw amino-acid sequence, 233 residues long: Probable fimbrial chaperone protein ElfD (233 aa).

The N-terminal stretch at 1–26 (MKTCITKGIVTVSLTAILLSCSSAWA) is a signal peptide.

It belongs to the periplasmic pilus chaperone family.

The protein resides in the periplasm. In terms of biological role, part of the elfADCG-ycbUVF fimbrial operon, which promotes adhesion of bacteria to different abiotic surfaces. Could be required for the biogenesis of the ElfA fimbriae. The polypeptide is Probable fimbrial chaperone protein ElfD (elfD) (Escherichia coli (strain K12)).